The chain runs to 181 residues: ATP synthase subunit b, chloroplastic (181 aa).

Residues 27–49 (LATNPINLSVVLGVVIYFGKGVL) traverse the membrane as a helical segment.

Belongs to the ATPase B chain family. As to quaternary structure, F-type ATPases have 2 components, F(1) - the catalytic core - and F(0) - the membrane proton channel. F(1) has five subunits: alpha(3), beta(3), gamma(1), delta(1), epsilon(1). F(0) has four main subunits: a(1), b(1), b'(1) and c(10-14). The alpha and beta chains form an alternating ring which encloses part of the gamma chain. F(1) is attached to F(0) by a central stalk formed by the gamma and epsilon chains, while a peripheral stalk is formed by the delta, b and b' chains.

The protein resides in the plastid. It localises to the chloroplast thylakoid membrane. Its function is as follows. F(1)F(0) ATP synthase produces ATP from ADP in the presence of a proton or sodium gradient. F-type ATPases consist of two structural domains, F(1) containing the extramembraneous catalytic core and F(0) containing the membrane proton channel, linked together by a central stalk and a peripheral stalk. During catalysis, ATP synthesis in the catalytic domain of F(1) is coupled via a rotary mechanism of the central stalk subunits to proton translocation. Component of the F(0) channel, it forms part of the peripheral stalk, linking F(1) to F(0). The protein is ATP synthase subunit b, chloroplastic of Lemna minor (Common duckweed).